The primary structure comprises 408 residues: Multidrug resistance protein MdtG (408 aa).

Helical transmembrane passes span leucine 16 to phenylalanine 36, isoleucine 58 to alanine 78, leucine 92 to isoleucine 112, alanine 115 to valine 135, threonine 146 to alanine 166, proline 173 to isoleucine 193, isoleucine 221 to isoleucine 241, valine 256 to proline 276, isoleucine 290 to threonine 310, and alanine 378 to leucine 398.

Belongs to the major facilitator superfamily. DHA1 family. MdtG (TC 2.A.1.2.20) subfamily.

The protein localises to the cell inner membrane. Functionally, confers resistance to fosfomycin and deoxycholate. In Escherichia coli (strain SMS-3-5 / SECEC), this protein is Multidrug resistance protein MdtG.